The following is a 312-amino-acid chain: Zinc transporter ZitB (312 aa).

6 consecutive transmembrane segments (helical) span residues 16-36, 40-60, 81-101, 117-137, 153-173, and 177-197; these read LLIA…GGWL, LALL…FIAL, LTTL…ILIV, TPML…FWIL, LHVL…IVIL, and WTPI…RSAW.

This sequence belongs to the cation diffusion facilitator (CDF) transporter (TC 2.A.4) family. SLC30A subfamily.

It localises to the cell inner membrane. Involved in zinc efflux across the cytoplasmic membrane, thus reducing zinc accumulation in the cytoplasm and rendering bacteria more resistant to zinc. It may contribute to zinc homeostasis at low concentrations of zinc. This chain is Zinc transporter ZitB, found in Yersinia pestis.